The following is a 452-amino-acid chain: Peptidoglycan DL-endopeptidase CwlO (452 aa).

The N-terminal stretch at 1–30 (MKKKVYTFGLASILGTASLFTPFMNNTASA) is a signal peptide. The segment covering 28-38 (ASAETSQQKQE) has biased composition (polar residues). Disordered stretches follow at residues 28 to 53 (ASAE…IESK) and 258 to 317 (AAAA…GSVV). Basic and acidic residues-rich tracts occupy residues 39–53 (IQQK…IESK) and 263–275 (KAKE…EKSD). Residues 276-317 (SGSSSSSNSGSVSKSDGSSNSGSSSSKKSSSPSRNYSSGSVV) are compositionally biased toward low complexity. The NlpC/P60 domain occupies 321 to 450 (GNAIEAAIST…KAFNGVVRRV (130 aa)). Cysteine 358 (nucleophile) is an active-site residue. Histidine 410 (proton acceptor) is an active-site residue. Residue asparagine 422 is part of the active site.

Belongs to the peptidase C40 family.

It localises to the secreted. Functionally, shows a cell wall hydrolytic DL-endopeptidase activity. The sequence is that of Peptidoglycan DL-endopeptidase CwlO (cwlO) from Bacillus licheniformis (strain ATCC 14580 / DSM 13 / JCM 2505 / CCUG 7422 / NBRC 12200 / NCIMB 9375 / NCTC 10341 / NRRL NRS-1264 / Gibson 46).